The sequence spans 2923 residues: MRSPATGVPLPTPPPPLLLLLLLLLPPPLLGDQVGPCRSLGSRGRGSSGACAPMGWLCPSSASNLWLYTSRCRDAGTELTGHLVPHHDGLRVWCPESEAHIPLPPAPEGCPWSCRLLGIGGHLSPQGKLTLPEEHPCLKAPRLRCQSCKLAQAPGLRAGERSPEESLGGRRKRNVNTAPQFQPPSYQATVPENQPAGTPVASLRAIDPDEGEAGRLEYTMDALFDSRSNQFFSLDPVTGAVTTAEELDRETKSTHVFRVTAQDHGMPRRSALATLTILVTDTNDHDPVFEQQEYKESLRENLEVGYEVLTVRATDGDAPPNANILYRLLEGSGGSPSEVFEIDPRSGVIRTRGPVDREEVESYQLTVEASDQGRDPGPRSTTAAVFLSVEDDNDNAPQFSEKRYVVQVREDVTPGAPVLRVTASDRDKGSNAVVHYSIMSGNARGQFYLDAQTGALDVVSPLDYETTKEYTLRVRAQDGGRPPLSNVSGLVTVQVLDINDNAPIFVSTPFQATVLESVPLGYLVLHVQAIDADAGDNARLEYRLAGVGHDFPFTINNGTGWISVAAELDREEVDFYSFGVEARDHGTPALTASASVSVTVLDVNDNNPTFTQPEYTVRLNEDAAVGTSVVTVSAVDRDAHSVITYQITSGNTRNRFSITSQSGGGLVSLALPLDYKLERQYVLAVTASDGTRQDTAQIVVNVTDANTHRPVFQSSHYTVNVNEDRPAGTTVVLISATDEDTGENARITYFMEDSIPQFRIDADTGAVTTQAELDYEDQVSYTLAITARDNGIPQKSDTTYLEILVNDVNDNAPQFLRDSYQGSVYEDVPPFTSVLQISATDRDSGLNGRVFYTFQGGDDGDGDFIVESTSGIVRTLRRLDRENVAQYVLRAYAVDKGMPPARTPMEVTVTVLDVNDNPPVFEQDEFDVFVEENSPIGLAVARVTATDPDEGTNAQIMYQIVEGNIPEVFQLDIFSGELTALVDLDYEDRPEYVLVIQATSAPLVSRATVHVRLLDRNDNPPVLGNFEILFNNYVTNRSSSFPGGAIGRVPAHDPDISDSLTYSFERGNELSLVLLNASTGELKLSRALDNNRPLEAIMSVLVSDGVHSVTAQCALRVTIITDEMLTHSITLRLEDMSPERFLSPLLGLFIQAVAATLATPPDHVVVFNVQRDTDAPGGHILNVSLSVGQPPGPGGGPPFLPSEDLQERLYLNRSLLTAISAQRVLPFDDNICLREPCENYMRCVSVLRFDSSAPFIASSSVLFRPIHPVGGLRCRCPPGFTGDYCETEVDLCYSRPCGPHGRCRSREGGYTCLCRDGYTGEHCEVSARSGRCTPGVCKNGGTCVNLLVGGFKCDCPSGDFEKPYCQVTTRSFPAHSFITFRGLRQRFHFTLALSFATKERDGLLLYNGRFNEKHDFVALEVIQEQVQLTFSAGESTTTVSPFVPGGVSDGQWHTVQLKYYNKPLLGQTGLPQGPSEQKVAVVTVDGCDTGVALRFGSVLGNYSCAAQGTQGGSKKSLDLTGPLLLGGVPDLPESFPVRMRQFVGCMRNLQVDSRHIDMADFIANNGTVPGCPAKKNVCDSNTCHNGGTCVNQWDAFSCECPLGFGGKSCAQEMANPQHFLGSSLVAWHGLSLPISQPWYLSLMFRTRQADGVLLQAITRGRSTITLQLREGHVMLSVEGTGLQASSLRLEPGRANDGDWHHAQLALGASGGPGHAILSFDYGQQRAEGNLGPRLHGLHLSNITVGGIPGPAGGVARGFRGCLQGVRVSDTPEGVNSLDPSHGESINVEQGCSLPDPCDSNPCPANSYCSNDWDSYSCSCDPGYYGDNCTNVCDLNPCEHQSVCTRKPSAPHGYTCECPPNYLGPYCETRIDQPCPRGWWGHPTCGPCNCDVSKGFDPDCNKTSGECHCKENHYRPPGSPTCLLCDCYPTGSLSRVCDPEDGQCPCKPGVIGRQCDRCDNPFAEVTTNGCEVNYDSCPRAIEAGIWWPRTRFGLPAAAPCPKGSFGTAVRHCDEHRGWLPPNLFNCTSITFSELKGFAERLQRNESGLDSGRSQQLALLLRNATQHTAGYFGSDVKVAYQLATRLLAHESTQRGFGLSATQDVHFTENLLRVGSALLDTANKRHWELIQQTEGGTAWLLQHYEAYASALAQNMRHTYLSPFTIVTPNIVISVVRLDKGNFAGAKLPRYEALRGEQPPDLETTVILPESVFRETPPVVRPAGPGEAQEPEELARRQRRHPELSQGEAVASVIIYRTLAGLLPHNYDPDKRSLRVPKRPIINTPVVSISVHDDEELLPRALDKPVTVQFRLLETEERTKPICVFWNHSILVSGTGGWSARGCEVVFRNESHVSCQCNHMTSFAVLMDVSRRENGEILPLKTLTYVALGVTLAALLLTFFFLTLLRILRSNQHGIRRNLTAALGLAQLVFLLGINQADLPFACTVIAILLHFLYLCTFSWALLEALHLYRALTEVRDVNTGPMRFYYMLGWGVPAFITGLAVGLDPEGYGNPDFCWLSIYDTLIWSFAGPVAFAVSMSVFLYILAARASCAAQRQGFEKKGPVSGLQPSFAVLLLLSATWLLALLSVNSDTLLFHYLFATCNCIQGPFIFLSYVVLSKEVRKALKLACSRKPSPDPALTTKSTLTSSYNCPSPYADGRLYQPYGDSAGSLHSTSRSGKSQPSYIPFLLREESALNPGQGPPGLGDPGSLFLEGQDQQHDPDTDSDSDLSLEDDQSGSYASTHSSDSEEEEEEEEEEAAFPGEQGWDSLLGPGAERLPLHSTPKDGGPGPGKAPWPGDFGTTAKESSGNGAPEERLRENGDALSREGSLGPLPGSSAQPHKGILKKKCLPTISEKSSLLRLPLEQCTGSSRGSSASEGSRGGPPPRPPPRQSLQEQLNGVMPIAMSIKAGTVDEDSSGSEFLFFNFLH.

A signal peptide spans 1 to 31 (MRSPATGVPLPTPPPPLLLLLLLLLPPPLLG). The Extracellular portion of the chain corresponds to 32-2380 (DQVGPCRSLG…GEILPLKTLT (2349 aa)). The tract at residues 154–198 (PGLRAGERSPEESLGGRRKRNVNTAPQFQPPSYQATVPENQPAGT) is disordered. The segment covering 158-168 (AGERSPEESLG) has biased composition (basic and acidic residues). Residues 175 to 196 (VNTAPQFQPPSYQATVPENQPA) are compositionally biased toward polar residues. Cadherin domains follow at residues 182 to 289 (QPPS…DPVF), 290 to 399 (EQQE…APQF), 400 to 505 (SEKR…APIF), 506 to 610 (VSTP…NPTF), 611 to 712 (TQPE…RPVF), 713 to 815 (QSSH…APQF), 816 to 921 (LRDS…PPVF), 922 to 1023 (EQDE…PPVL), and 1028 to 1146 (ILFN…SPLL). 3 N-linked (GlcNAc...) asparagine glycosylation sites follow: asparagine 486, asparagine 557, and asparagine 701. 4 N-linked (GlcNAc...) asparagine glycosylation sites follow: asparagine 1036, asparagine 1076, asparagine 1182, and asparagine 1212. The EGF-like 1; calcium-binding domain occupies 1228 to 1286 (DDNICLREPCENYMRCVSVLRFDSSAPFIASSSVLFRPIHPVGGLRCRCPPGFTGDYCE). 9 disulfides stabilise this stretch: cysteine 1232/cysteine 1243, cysteine 1237/cysteine 1274, cysteine 1276/cysteine 1285, cysteine 1292/cysteine 1303, cysteine 1297/cysteine 1312, cysteine 1314/cysteine 1323, cysteine 1332/cysteine 1343, cysteine 1337/cysteine 1353, and cysteine 1355/cysteine 1365. One can recognise an EGF-like 2; calcium-binding domain in the interval 1288 to 1324 (EVDLCYSRPCGPHGRCRSREGGYTCLCRDGYTGEHCE). The 39-residue stretch at 1328–1366 (RSGRCTPGVCKNGGTCVNLLVGGFKCDCPSGDFEKPYCQ) folds into the EGF-like 3; calcium-binding domain. Positions 1367–1571 (VTTRSFPAHS…IANNGTVPGC (205 aa)) constitute a Laminin G-like 1 domain. N-linked (GlcNAc...) asparagine glycosylation is found at asparagine 1501 and asparagine 1565. Intrachain disulfides connect cysteine 1545–cysteine 1571, cysteine 1578–cysteine 1589, cysteine 1583–cysteine 1598, and cysteine 1600–cysteine 1609. The EGF-like 4; calcium-binding domain occupies 1574 to 1610 (KKNVCDSNTCHNGGTCVNQWDAFSCECPLGFGGKSCA). Position 1591 is a (3R)-3-hydroxyasparagine (asparagine 1591). The Laminin G-like 2 domain maps to 1614–1791 (ANPQHFLGSS…GESINVEQGC (178 aa)). Asparagine 1741 carries N-linked (GlcNAc...) asparagine glycosylation. Cystine bridges form between cysteine 1761–cysteine 1791, cysteine 1797–cysteine 1808, cysteine 1802–cysteine 1817, cysteine 1819–cysteine 1828, cysteine 1832–cysteine 1843, cysteine 1837–cysteine 1855, cysteine 1857–cysteine 1866, cysteine 1887–cysteine 1899, cysteine 1889–cysteine 1906, cysteine 1908–cysteine 1921, cysteine 1924–cysteine 1936, cysteine 1926–cysteine 1943, cysteine 1945–cysteine 1954, and cysteine 1957–cysteine 1969. In terms of domain architecture, EGF-like 5; calcium-binding spans 1793 to 1828 (LPDPCDSNPCPANSYCSNDWDSYSCSCDPGYYGDNC). Position 1810 is a (3R)-3-hydroxyasparagine (asparagine 1810). N-linked (GlcNAc...) asparagine glycosylation is present at asparagine 1827. The region spanning 1829 to 1867 (TNVCDLNPCEHQSVCTRKPSAPHGYTCECPPNYLGPYCE) is the EGF-like 6; calcium-binding domain. Residues 1883–1922 (TCGPCNCDVSKGFDPDCNKTSGECHCKENHYRPPGSPTCL) enclose the EGF-like 7; calcium-binding domain. Residue asparagine 1900 is glycosylated (N-linked (GlcNAc...) asparagine). The Laminin EGF-like domain occupies 1924 to 1971 (CDCYPTGSLSRVCDPEDGQCPCKPGVIGRQCDRCDNPFAEVTTNGCEV). Asparagine 2024, asparagine 2043, and asparagine 2061 each carry an N-linked (GlcNAc...) asparagine glycan. Positions 2199-2369 (ETTVILPESV…AVLMDVSRRE (171 aa)) constitute a GAIN-B domain. The segment at 2213–2238 (PPVVRPAGPGEAQEPEELARRQRRHP) is disordered. Intrachain disulfides connect cysteine 2319–cysteine 2351 and cysteine 2339–cysteine 2353. The interval 2319–2369 (CVFWNHSILVSGTGGWSARGCEVVFRNESHVSCQCNHMTSFAVLMDVSRRE) is GPS. 2 N-linked (GlcNAc...) asparagine glycosylation sites follow: asparagine 2323 and asparagine 2345. Residues 2381–2401 (YVALGVTLAALLLTFFFLTLL) traverse the membrane as a helical segment. The Cytoplasmic portion of the chain corresponds to 2402-2416 (RILRSNQHGIRRNLT). The chain crosses the membrane as a helical span at residues 2417–2437 (AALGLAQLVFLLGINQADLPF). Alanine 2438 is a topological domain (extracellular). The helical transmembrane segment at 2439–2459 (CTVIAILLHFLYLCTFSWALL) threads the bilayer. At 2460-2480 (EALHLYRALTEVRDVNTGPMR) the chain is on the cytoplasmic side. Residues 2481–2501 (FYYMLGWGVPAFITGLAVGLD) traverse the membrane as a helical segment. The Extracellular segment spans residues 2502 to 2519 (PEGYGNPDFCWLSIYDTL). A helical membrane pass occupies residues 2520 to 2540 (IWSFAGPVAFAVSMSVFLYIL). The Cytoplasmic portion of the chain corresponds to 2541 to 2560 (AARASCAAQRQGFEKKGPVS). Residues 2561-2581 (GLQPSFAVLLLLSATWLLALL) form a helical membrane-spanning segment. The Extracellular portion of the chain corresponds to 2582–2591 (SVNSDTLLFH). The helical transmembrane segment at 2592–2612 (YLFATCNCIQGPFIFLSYVVL) threads the bilayer. Residues 2613–2923 (SKEVRKALKL…SEFLFFNFLH (311 aa)) lie on the Cytoplasmic side of the membrane. Disordered stretches follow at residues 2688 to 2838 (SALN…HKGI) and 2854 to 2888 (LRLP…RQSL). 2 stretches are compositionally biased toward acidic residues: residues 2718–2730 (TDSD…EDDQ) and 2742–2753 (SEEEEEEEEEEA). Over residues 2807-2819 (PEERLRENGDALS) the composition is skewed to basic and acidic residues. A compositionally biased stretch (low complexity) spans 2863 to 2873 (GSSRGSSASEG).

This sequence belongs to the G-protein coupled receptor 2 family. LN-TM7 subfamily. Heterodimer of 2 chains generated by proteolytic processing; the large extracellular N-terminal fragment and the membrane-bound C-terminal fragment predominantly remain associated and non-covalently linked. In terms of processing, the iron and 2-oxoglutarate dependent 3-hydroxylation of aspartate and asparagine is (R) stereospecific within EGF domains. Post-translationally, autoproteolytically processed at the GPS region of the GAIN-B domain; this cleavage modulates receptor activity. As to expression, highest expression in brain and testis.

It is found in the cell membrane. In terms of biological role, receptor that may have an important role in cell/cell signaling during nervous system formation. The chain is Cadherin EGF LAG seven-pass G-type receptor 2 from Homo sapiens (Human).